The sequence spans 323 residues: ATP synthase gamma chain (323 aa).

The interval 215 to 237 is disordered; it reads PAGGPAKEQEQGDEGGHGAPSAA. Residues 221-230 show a composition bias toward basic and acidic residues; sequence KEQEQGDEGG.

This sequence belongs to the ATPase gamma chain family. In terms of assembly, F-type ATPases have 2 components, CF(1) - the catalytic core - and CF(0) - the membrane proton channel. CF(1) has five subunits: alpha(3), beta(3), gamma(1), delta(1), epsilon(1). CF(0) has three main subunits: a, b and c.

It is found in the cell inner membrane. Functionally, produces ATP from ADP in the presence of a proton gradient across the membrane. The gamma chain is believed to be important in regulating ATPase activity and the flow of protons through the CF(0) complex. This Sorangium cellulosum (strain So ce56) (Polyangium cellulosum (strain So ce56)) protein is ATP synthase gamma chain.